The primary structure comprises 145 residues: MNIETKYHGTVQLSQLALVSFENGLPGFEHEKQFALLPIHDSPFTILQSIQHKDVAFVMIEPFSYFPTYEIELDDATCEQLKIQKENDVALYVILTVAEPFTNTTANLQAPVVINVHERIGKQVILTNTPYKTKHRLFPETVEAK.

The protein belongs to the FliW family. Interacts with translational regulator CsrA and flagellin(s).

The protein localises to the cytoplasm. Its function is as follows. Acts as an anti-CsrA protein, binds CsrA and prevents it from repressing translation of its target genes, one of which is flagellin. Binds to flagellin and participates in the assembly of the flagellum. The chain is Flagellar assembly factor FliW from Anoxybacillus flavithermus (strain DSM 21510 / WK1).